The primary structure comprises 610 residues: Elongation factor 4 (610 aa).

Residues 12 to 194 enclose the tr-type G domain; it reads EKIRNFSIIA…QIVEKVPAPQ (183 aa). Residues 24 to 29 and 141 to 144 each bind GTP; these read DHGKST and NKID.

This sequence belongs to the TRAFAC class translation factor GTPase superfamily. Classic translation factor GTPase family. LepA subfamily.

It is found in the cell membrane. It catalyses the reaction GTP + H2O = GDP + phosphate + H(+). Its function is as follows. Required for accurate and efficient protein synthesis under certain stress conditions. May act as a fidelity factor of the translation reaction, by catalyzing a one-codon backward translocation of tRNAs on improperly translocated ribosomes. Back-translocation proceeds from a post-translocation (POST) complex to a pre-translocation (PRE) complex, thus giving elongation factor G a second chance to translocate the tRNAs correctly. Binds to ribosomes in a GTP-dependent manner. The chain is Elongation factor 4 from Streptococcus thermophilus (strain ATCC BAA-250 / LMG 18311).